The following is a 256-amino-acid chain: MKPSFVLLSIVLLLSSSLSDAADFGSPSQPPSMAPTPQPSNSTDCSSVIYSMVDCLSFLTVGSTDPSPTKTCCVGVKTVLNYSPKCLCSALESSREMGFVLDDTKALAMPKICNVPIDPNCDVSTPAASTPVSPPVESPTTSPSSAKSPAITPSSPAVSHSPPPVRHSSPPVSHSSPPVSHSSPPTSRSSPAVSHSSPVVAASSPVKAVSSSTASSPRAASPSPSPSPSISSSGILLVSKLFIAVVMVSSFLYILA.

An N-terminal signal peptide occupies residues M1–A21. Residue N41 is glycosylated (N-linked (GlcNAc...) asparagine). Intrachain disulfides connect C45–C88, C55–C72, C73–C113, and C86–C121. Residues T125–I230 are disordered. Residues S138 to I230 show a composition bias toward low complexity. The GPI-anchor amidated serine moiety is linked to residue S225. Residues P226–A256 constitute a propeptide, removed in mature form.

This sequence belongs to the plant LTP family. Confined to the anthers of the inflorescence.

It localises to the cell membrane. Functionally, probable lipid transfer protein. This chain is Non-specific lipid transfer protein GPI-anchored 23, found in Arabidopsis thaliana (Mouse-ear cress).